A 517-amino-acid chain; its full sequence is Crotonobetaine/carnitine--CoA ligase (517 aa).

The protein belongs to the ATP-dependent AMP-binding enzyme family.

The catalysed reaction is 4-(trimethylamino)butanoate + ATP + CoA = 4-(trimethylamino)butanoyl-CoA + AMP + diphosphate. It catalyses the reaction crotonobetaine + ATP + CoA = crotonobetainyl-CoA + AMP + diphosphate. The enzyme catalyses (R)-carnitine + ATP + CoA = (R)-carnitinyl-CoA + AMP + diphosphate. It functions in the pathway amine and polyamine metabolism; carnitine metabolism. Its function is as follows. Catalyzes the transfer of CoA to carnitine, generating the initial carnitinyl-CoA needed for the CaiB reaction cycle. Also has activity toward crotonobetaine and gamma-butyrobetaine. The protein is Crotonobetaine/carnitine--CoA ligase of Escherichia coli (strain K12 / MC4100 / BW2952).